The sequence spans 796 residues: Peroxisome proliferator-activated receptor gamma coactivator 1-alpha (796 aa).

K77 bears the N6-acetyllysine mark. The tract at residues P98–E138 is disordered. Residues D114–P127 show a composition bias toward polar residues. The LXXLL motif signature appears at L142–L146. At K144 the chain carries N6-acetyllysine. Position 176 is a phosphothreonine; by AMPK (T176). K182 bears the N6-acetyllysine mark. The segment at Y211–N275 is disordered. Over residues D217–A235 the composition is skewed to basic and acidic residues. Polar residues predominate over residues T242 to L258. N6-acetyllysine occurs at positions 252, 269, 276, 319, 345, 411, 440, and 449. The tract at residues G288–S350 is disordered. Residues G291–T337 form an interaction with PPARG region. Residues E348–R796 form a mediates interaction with RNF34 region. S537 is subject to Phosphoserine; by AMPK. Disordered stretches follow at residues F541 to S597 and H611 to K669. The segment covering Q561 to C576 has biased composition (basic residues). Low complexity predominate over residues S577–S597. Residues S620–R629 show a composition bias toward basic residues. The segment covering P630–K669 has biased composition (basic and acidic residues). The 77-residue stretch at R675 to R751 folds into the RRM domain. K756 and K777 each carry N6-acetyllysine.

As to quaternary structure, homooligomer. Interacts with MYBBP1A; inhibits MYBBP1A transcriptional activation. Interacts with PRDM16, LPIN1 and PML. Interacts (via LXXLL motif) with RORA and RORC (via AF-2 motif); activates RORA and RORC transcriptional activation. Interacts with LRPPRC. Interacts with FOXO1. Interacts with NR5A2. Post-translationally, phosphorylation by AMPK in skeletal muscle increases activation of its own promoter. Phosphorylated by CLK2. In terms of processing, heavily acetylated by KAT2A/GCN5 under conditions of high nutrients, leading to inactivation of PPARGC1A. Deacetylated by SIRT1 in low nutrients/high NAD conditions, leading to its activation. Ubiquitinated. Ubiquitination by RNF34 induces proteasomal degradation.

The protein localises to the nucleus. It is found in the PML body. Functionally, transcriptional coactivator for steroid receptors and nuclear receptors. Greatly increases the transcriptional activity of PPARG and thyroid hormone receptor on the uncoupling protein promoter. Can regulate key mitochondrial genes that contribute to the program of adaptive thermogenesis. Plays an essential role in metabolic reprogramming in response to dietary availability through coordination of the expression of a wide array of genes involved in glucose and fatty acid metabolism. Acts as a key regulator of gluconeogenesis: stimulates hepatic gluconeogenesis by increasing the expression of gluconeogenic enzymes, and acting together with FOXO1 to promote the fasting gluconeogenic program. Induces the expression of PERM1 in the skeletal muscle in an ESRRA-dependent manner. Also involved in the integration of the circadian rhythms and energy metabolism. Required for oscillatory expression of clock genes, such as BMAL1 and NR1D1, through the coactivation of RORA and RORC, and metabolic genes, such as PDK4 and PEPCK. In Rattus norvegicus (Rat), this protein is Peroxisome proliferator-activated receptor gamma coactivator 1-alpha (Ppargc1a).